A 342-amino-acid chain; its full sequence is L-threonine 3-dehydrogenase (342 aa).

A Zn(2+)-binding site is contributed by cysteine 38. Residues threonine 40 and histidine 43 each act as charge relay system in the active site. Zn(2+) contacts are provided by histidine 63, glutamate 64, cysteine 93, cysteine 96, cysteine 99, and cysteine 107. Residues isoleucine 175, aspartate 195, arginine 200, 262-264, and 286-287 contribute to the NAD(+) site; these read LGI and IY.

Belongs to the zinc-containing alcohol dehydrogenase family. As to quaternary structure, homotetramer. Requires Zn(2+) as cofactor.

Its subcellular location is the cytoplasm. The enzyme catalyses L-threonine + NAD(+) = (2S)-2-amino-3-oxobutanoate + NADH + H(+). It participates in amino-acid degradation; L-threonine degradation via oxydo-reductase pathway; glycine from L-threonine: step 1/2. In terms of biological role, catalyzes the NAD(+)-dependent oxidation of L-threonine to 2-amino-3-ketobutyrate. In Aeromonas hydrophila subsp. hydrophila (strain ATCC 7966 / DSM 30187 / BCRC 13018 / CCUG 14551 / JCM 1027 / KCTC 2358 / NCIMB 9240 / NCTC 8049), this protein is L-threonine 3-dehydrogenase.